Reading from the N-terminus, the 552-residue chain is Non-structural protein NS1 (552 aa).

It belongs to the orbivirus non-structural protein NS1 family.

This chain is Non-structural protein NS1 (Segment-5), found in Antilocapra americana (Pronghorn).